The sequence spans 159 residues: Probable RNA-binding protein EIF1AD (159 aa).

The S1-like domain occupies 18-93 (MMEDDYALPT…VKAEICKILT (76 aa)). The segment at 109 to 159 (KFTKKPVQEEATSQNKDDSDFEDDLLPNTNRPVNRDSSDEEEDEETSSEED) is disordered. Residues 146-159 (SDEEEDEETSSEED) show a composition bias toward acidic residues.

It belongs to the EIF1AD family.

The sequence is that of Probable RNA-binding protein EIF1AD from Drosophila melanogaster (Fruit fly).